We begin with the raw amino-acid sequence, 211 residues long: Shikimate kinase (211 aa).

The interval 1–22 is disordered; sequence MHFRYNYRMQRSKTPNTKNSDT. Positions 12-22 are enriched in polar residues; the sequence is SKTPNTKNSDT. 36 to 41 is a binding site for ATP; the sequence is GSGKTT. A Mg(2+)-binding site is contributed by threonine 40. Residues aspartate 58, arginine 82, and glycine 104 each coordinate substrate. Arginine 142 contributes to the ATP binding site. Arginine 161 provides a ligand contact to substrate. Glutamine 178 serves as a coordination point for ATP.

Belongs to the shikimate kinase family. In terms of assembly, monomer. Requires Mg(2+) as cofactor.

Its subcellular location is the cytoplasm. The enzyme catalyses shikimate + ATP = 3-phosphoshikimate + ADP + H(+). The protein operates within metabolic intermediate biosynthesis; chorismate biosynthesis; chorismate from D-erythrose 4-phosphate and phosphoenolpyruvate: step 5/7. Functionally, catalyzes the specific phosphorylation of the 3-hydroxyl group of shikimic acid using ATP as a cosubstrate. The chain is Shikimate kinase from Nitrosomonas europaea (strain ATCC 19718 / CIP 103999 / KCTC 2705 / NBRC 14298).